The chain runs to 84 residues: Small ribosomal subunit protein uS17 (84 aa).

This sequence belongs to the universal ribosomal protein uS17 family. In terms of assembly, part of the 30S ribosomal subunit.

Functionally, one of the primary rRNA binding proteins, it binds specifically to the 5'-end of 16S ribosomal RNA. This chain is Small ribosomal subunit protein uS17, found in Clostridioides difficile (strain 630) (Peptoclostridium difficile).